The chain runs to 86 residues: Toxin CngtIV (86 aa).

A signal peptide spans Met-1–Ala-19. Residues Lys-20–Gly-84 form the LCN-type CS-alpha/beta domain. 4 cysteine pairs are disulfide-bonded: Cys-30-Cys-83, Cys-34-Cys-59, Cys-43-Cys-64, and Cys-47-Cys-66.

Belongs to the long (4 C-C) scorpion toxin superfamily. Sodium channel inhibitor family. Beta subfamily. As to expression, expressed by the venom gland.

It is found in the secreted. Its function is as follows. Beta toxins bind voltage-independently at site-4 of sodium channels (Nav) and shift the voltage of activation toward more negative potentials thereby affecting sodium channel activation and promoting spontaneous and repetitive firing. The polypeptide is Toxin CngtIV (Centruroides noxius (Mexican scorpion)).